The following is a 300-amino-acid chain: Cation-efflux pump FieF (300 aa).

A helical transmembrane segment spans residues 24-44; sequence LLIKIFAWWYTGSVSILAALV. The Zn(2+) site is built by aspartate 45 and aspartate 49. Transmembrane regions (helical) follow at residues 82-102 and 114-134; these read AALA…LTGI and AGVG…LVTF. Positions 153 and 157 each coordinate Zn(2+). A run of 2 helical transmembrane segments spans residues 156–176 and 178–198; these read SDVM…YGWH and ADAL…LRMG.

The protein belongs to the cation diffusion facilitator (CDF) transporter (TC 2.A.4) family. FieF subfamily. Homodimer.

The protein localises to the cell inner membrane. It carries out the reaction Zn(2+)(in) + H(+)(out) = Zn(2+)(out) + H(+)(in). The catalysed reaction is Cd(2+)(in) + H(+)(out) = Cd(2+)(out) + H(+)(in). The enzyme catalyses Fe(2+)(in) + H(+)(out) = Fe(2+)(out) + H(+)(in). Divalent metal cation transporter which exports Zn(2+), Cd(2+) and possibly Fe(2+). May be involved in zinc and iron detoxification by efflux. The sequence is that of Cation-efflux pump FieF from Klebsiella pneumoniae (strain 342).